The following is an 81-amino-acid chain: Large ribosomal subunit protein bL31B (81 aa).

It belongs to the bacterial ribosomal protein bL31 family. Type B subfamily. In terms of assembly, part of the 50S ribosomal subunit.

This Pediococcus pentosaceus (strain ATCC 25745 / CCUG 21536 / LMG 10740 / 183-1w) protein is Large ribosomal subunit protein bL31B.